A 154-amino-acid chain; its full sequence is Interleukin-2 (154 aa).

The signal sequence occupies residues 1-20 (MYRMQLLSCIALSLALVTNS). O-linked (GalNAc...) threonine glycosylation occurs at threonine 23. Cysteines 78 and 126 form a disulfide.

The protein belongs to the IL-2 family.

The protein localises to the secreted. Its function is as follows. Cytokine produced by activated CD4-positive helper T-cells and to a lesser extend activated CD8-positive T-cells and natural killer (NK) cells that plays pivotal roles in the immune response and tolerance. Binds to a receptor complex composed of either the high-affinity trimeric IL-2R (IL2RA/CD25, IL2RB/CD122 and IL2RG/CD132) or the low-affinity dimeric IL-2R (IL2RB and IL2RG). Interaction with the receptor leads to oligomerization and conformation changes in the IL-2R subunits resulting in downstream signaling starting with phosphorylation of JAK1 and JAK3. In turn, JAK1 and JAK3 phosphorylate the receptor to form a docking site leading to the phosphorylation of several substrates including STAT5. This process leads to activation of several pathways including STAT, phosphoinositide-3-kinase/PI3K and mitogen-activated protein kinase/MAPK pathways. Functions as a T-cell growth factor and can increase NK-cell cytolytic activity as well. Promotes strong proliferation of activated B-cells and subsequently immunoglobulin production. Plays a pivotal role in regulating the adaptive immune system by controlling the survival and proliferation of regulatory T-cells, which are required for the maintenance of immune tolerance. Moreover, participates in the differentiation and homeostasis of effector T-cell subsets, including Th1, Th2, Th17 as well as memory CD8-positive T-cells. The sequence is that of Interleukin-2 (IL2) from Macaca fascicularis (Crab-eating macaque).